We begin with the raw amino-acid sequence, 200 residues long: Glycerol-3-phosphate acyltransferase (200 aa).

Helical transmembrane passes span 2-22 (FNIP…AVIV), 51-71 (KAAA…VLLA), 84-104 (AIAA…FFGF), 114-134 (LGVL…IWLV), and 158-178 (LFFM…ILVL).

This sequence belongs to the PlsY family. In terms of assembly, probably interacts with PlsX.

It localises to the cell inner membrane. The enzyme catalyses an acyl phosphate + sn-glycerol 3-phosphate = a 1-acyl-sn-glycero-3-phosphate + phosphate. Its pathway is lipid metabolism; phospholipid metabolism. In terms of biological role, catalyzes the transfer of an acyl group from acyl-phosphate (acyl-PO(4)) to glycerol-3-phosphate (G3P) to form lysophosphatidic acid (LPA). This enzyme utilizes acyl-phosphate as fatty acyl donor, but not acyl-CoA or acyl-ACP. The chain is Glycerol-3-phosphate acyltransferase from Neisseria meningitidis serogroup A / serotype 4A (strain DSM 15465 / Z2491).